An 80-amino-acid chain; its full sequence is Cell division protein ZapB (80 aa).

The stretch at 3–80 forms a coiled coil; sequence LEILEQLEAK…GLLGKMDEVE (78 aa). The tract at residues 41 to 60 is disordered; that stretch reads LEQANNGRSEVEQEAQRARD. Basic and acidic residues predominate over residues 49 to 60; it reads SEVEQEAQRARD.

This sequence belongs to the ZapB family. In terms of assembly, homodimer. The ends of the coiled-coil dimer bind to each other, forming polymers. Interacts with FtsZ.

The protein localises to the cytoplasm. Its function is as follows. Non-essential, abundant cell division factor that is required for proper Z-ring formation. It is recruited early to the divisome by direct interaction with FtsZ, stimulating Z-ring assembly and thereby promoting cell division earlier in the cell cycle. Its recruitment to the Z-ring requires functional FtsA or ZipA. This Aliivibrio fischeri (strain ATCC 700601 / ES114) (Vibrio fischeri) protein is Cell division protein ZapB.